The chain runs to 134 residues: Arginine decarboxylase proenzyme (134 aa).

Serine 82 (schiff-base intermediate with substrate; via pyruvic acid) is an active-site residue. Serine 82 carries the pyruvic acid (Ser); by autocatalysis modification. Residue histidine 87 is the Proton acceptor; for processing activity of the active site. Residue cysteine 102 is the Proton donor; for catalytic activity of the active site.

This sequence belongs to the prokaryotic AdoMetDC family. Type 1 subfamily. As to quaternary structure, heterooctamer of four alpha and four beta chains arranged as a tetramer of alpha/beta heterodimers. Pyruvate serves as cofactor. Is synthesized initially as an inactive proenzyme. Formation of the active enzyme involves a self-maturation process in which the active site pyruvoyl group is generated from an internal serine residue via an autocatalytic post-translational modification. Two non-identical subunits are generated from the proenzyme in this reaction, and the pyruvate is formed at the N-terminus of the alpha chain, which is derived from the carboxyl end of the proenzyme. The post-translation cleavage follows an unusual pathway, termed non-hydrolytic serinolysis, in which the side chain hydroxyl group of the serine supplies its oxygen atom to form the C-terminus of the beta chain, while the remainder of the serine residue undergoes an oxidative deamination to produce ammonia and the pyruvoyl group blocking the N-terminus of the alpha chain.

It catalyses the reaction L-arginine + H(+) = agmatine + CO2. The protein operates within amine and polyamine biosynthesis; agmatine biosynthesis; agmatine from L-arginine: step 1/1. In terms of biological role, specifically catalyzes the decarboxylation of L-arginine to agmatine. Has no S-adenosylmethionine decarboxylase (AdoMetDC) activity. The chain is Arginine decarboxylase proenzyme from Caldivirga maquilingensis (strain ATCC 700844 / DSM 13496 / JCM 10307 / IC-167).